Here is a 281-residue protein sequence, read N- to C-terminus: Apolipoprotein Eb (281 aa).

The signal sequence occupies residues 1 to 18 (MRSLVVFFALAVLTGCQA). Residues 19-24 (RSLFQA) constitute a propeptide that is removed on maturation. The interval 34-66 (MVDRFWQYVSELNTQTDGMVQNIKGSQLSRELD) is 3 X approximate tandem repeats. A run of 9 repeats spans residues 67-88 (TLIT…TQMT), 89-110 (PYAS…GKLQ), 111-132 (TDMT…TMME), 133-154 (QNAD…KRLN), 155-176 (KDTE…SRAS), 177-199 (QNAD…GATQ), 200-227 (KLGA…GALK), 228-249 (EKLE…DELT), and 254-281 (PYSQ…PTQA). A 9 X 22 AA approximate tandem repeats region spans residues 67-281 (TLITDTMAEL…EATAALPTQA (215 aa)).

Belongs to the apolipoprotein A1/A4/E family. As to quaternary structure, homotetramer.

The protein resides in the secreted. It is found in the extracellular space. It localises to the extracellular matrix. Its function is as follows. APOE is an apolipoprotein, a protein associating with lipid particles, that mainly functions in lipoprotein-mediated lipid transport between organs via the plasma and interstitial fluids. APOE is a core component of plasma lipoproteins and is involved in their production, conversion and clearance. Apolipoproteins are amphipathic molecules that interact both with lipids of the lipoprotein particle core and the aqueous environment of the plasma. This is Apolipoprotein Eb (apoeb) from Danio rerio (Zebrafish).